Consider the following 251-residue polypeptide: uncharacterized protein (251 aa).

7 helical membrane-spanning segments follow: residues 48–68 (WMVGGVTILTFMALLYLVELI), 88–108 (VLWGISFAPVLHANWQHLVAN), 110–130 (IPLLVLGFLIALAGLSRFIWV), 132–152 (AMVWIFGGSATWLIGNMGSSF), 158–178 (IGVSGLIFGWLAFLLVFGLFV), 184–204 (IIGCMVLFAYGGVLLGVMPVL), and 209–229 (GVSWQGHLCGAISGVVAAYLL).

To M.tuberculosis Rv1337.

It localises to the cell membrane. This is an uncharacterized protein from Mycobacterium leprae (strain TN).